Reading from the N-terminus, the 198-residue chain is Large ribosomal subunit protein bL12m (198 aa).

The N-terminal 36 residues, 1–36, are a transit peptide targeting the mitochondrion; sequence MLPSATSLLRGPCLGLRAAALRLVRQQVPHVCAVRL. A compositionally biased stretch (low complexity) spans 106–115; it reads GAAPAPTAPE. Positions 106–126 are disordered; it reads GAAPAPTAPEAAEEDVPKQKE. Residues Lys-125, Lys-138, Lys-142, and Lys-144 each carry the N6-acetyllysine modification. N6-acetyllysine; alternate is present on Lys-150. An N6-succinyllysine; alternate modification is found at Lys-150. Residue Lys-150 forms a Glycyl lysine isopeptide (Lys-Gly) (interchain with G-Cter in ubiquitin) linkage. Lys-162 bears the N6-succinyllysine mark. 2 positions are modified to N6-acetyllysine: Lys-163 and Lys-173. The residue at position 178 (Lys-178) is an N6-acetyllysine; alternate. Lys-178 is subject to N6-succinyllysine; alternate. Lys-185 carries the post-translational modification N6-acetyllysine.

Belongs to the bacterial ribosomal protein bL12 family. Component of the mitochondrial ribosome large subunit (39S) which comprises a 16S rRNA and about 50 distinct proteins. Interacts with NOA1. Post-translationally, two mature forms are produced by differential two-step proteolytic cleavage. Cleaved by the mitochondrial processing protease to produce the long mature form and subsequently by the mitochondrial intermediate protease to produce the short mature form. In the presence of CUL3, undergoes 'Lys-63'-linked ubiquitination at Lys-150 which results in proteasomal degradation.

The protein localises to the mitochondrion matrix. Functionally, as a component of the mitochondrial large ribosomal subunit, plays a role in mitochondrial translation. When present in mitochondria as a free protein not associated with the ribosome, associates with mitochondrial RNA polymerase POLRMT to activate transcription. Required for POLRMT stability. This Bos taurus (Bovine) protein is Large ribosomal subunit protein bL12m (MRPL12).